The sequence spans 98 residues: uncharacterized protein (98 aa).

The protein belongs to the CFAP97 family. In terms of tissue distribution, expressed in a number of tissues including brain, thymus, lung, heart, liver, spleen, kidney and testis.

This is an uncharacterized protein from Mus musculus (Mouse).